The chain runs to 361 residues: MASPAVPANVPPATAAAAPAPVVTAAPASAPTPSTPAPTPAATPAASPAPVSSDPAVAAPAAPGQTPASAPAPAQTPAPSQPGPALPGPFPGGRVVRLHPVILASIVDSYERRNEGAARVIGTLLGTVDKHSVEVTNCFSVPHNESEDEVAVDMEFAKNMYELHKKVSPNELILGWYATGHDITEHSVLIHEYYSREAPNPIHLTVDTGLQHGRMSIKAYVSTLMGVPGRTMGVMFTPLTVKYAYYDTERIGVDLIMKTCFSPNRVIGLSSDLQQVGGASARIQDALSTVLQYAEDVLSGKVSADNTVGRFLMSLVNQVPKIVPDDFETMLNSNINDLLMVTYLANLTQSQIALNEKLVNL.

Composition is skewed to low complexity over residues 1–32 (MASP…SAPT) and 42–73 (ATPA…APAP). A disordered region spans residues 1–91 (MASPAVPANV…PGPALPGPFP (91 aa)). A2 is subject to N-acetylalanine. S52 carries the post-translational modification Phosphoserine; by CDK11; in vitro. A compositionally biased stretch (pro residues) spans 74–90 (AQTPAPSQPGPALPGPF). In terms of domain architecture, MPN spans 96-226 (VRLHPVILAS…IKAYVSTLMG (131 aa)). N6-acetyllysine is present on K242. At S262 the chain carries Phosphoserine.

Belongs to the eIF-3 subunit F family. In terms of assembly, component of the eukaryotic translation initiation factor 3 (eIF-3) complex, which is composed of 13 subunits: EIF3A, EIF3B, EIF3C, EIF3D, EIF3E, EIF3F, EIF3G, EIF3H, EIF3I, EIF3J, EIF3K, EIF3L and EIF3M. The eIF-3 complex appears to include 3 stable modules: module A is composed of EIF3A, EIF3B, EIF3G and EIF3I; module B is composed of EIF3F, EIF3H, and EIF3M; and module C is composed of EIF3C, EIF3D, EIF3E, EIF3K and EIF3L. EIF3C of module C binds EIF3B of module A and EIF3H of module B, thereby linking the three modules. EIF3J is a labile subunit that binds to the eIF-3 complex via EIF3B. The eIF-3 complex may interact with RPS6KB1 under conditions of nutrient depletion. Mitogenic stimulation may lead to binding and activation of a complex composed of MTOR and RPTOR, leading to phosphorylation and release of RPS6KB1 and binding of EIF4B to eIF-3. Interacts with RNF139; the interaction leads to protein translation inhibitions in a ubiquitination-dependent manner. Interacts with DTX1, the interaction is required for deubiquitinating activity towards NOTCH1. Post-translationally, phosphorylation is enhanced upon serum stimulation. Phosphorylated during apoptosis by caspase-processed CDK11.

It localises to the cytoplasm. The enzyme catalyses Thiol-dependent hydrolysis of ester, thioester, amide, peptide and isopeptide bonds formed by the C-terminal Gly of ubiquitin (a 76-residue protein attached to proteins as an intracellular targeting signal).. Component of the eukaryotic translation initiation factor 3 (eIF-3) complex, which is required for several steps in the initiation of protein synthesis. The eIF-3 complex associates with the 40S ribosome and facilitates the recruitment of eIF-1, eIF-1A, eIF-2:GTP:methionyl-tRNAi and eIF-5 to form the 43S pre-initiation complex (43S PIC). The eIF-3 complex stimulates mRNA recruitment to the 43S PIC and scanning of the mRNA for AUG recognition. The eIF-3 complex is also required for disassembly and recycling of post-termination ribosomal complexes and subsequently prevents premature joining of the 40S and 60S ribosomal subunits prior to initiation. The eIF-3 complex specifically targets and initiates translation of a subset of mRNAs involved in cell proliferation, including cell cycling, differentiation and apoptosis, and uses different modes of RNA stem-loop binding to exert either translational activation or repression. Functionally, deubiquitinates activated NOTCH1, promoting its nuclear import, thereby acting as a positive regulator of Notch signaling. In Mus musculus (Mouse), this protein is Eukaryotic translation initiation factor 3 subunit F (Eif3f).